Here is a 346-residue protein sequence, read N- to C-terminus: MNNLKWVAYFLKSRMNWIFWILFLNLLMLGISLIDYDFPIDSLFYIVSLNLSLTMIFLILTYFKEVKLYKHFDKDKEIEEIKHKDLAETPFQRHTVDYLYRQISAHKEKVVEQQLQLNMHEQTITEFVHDIKTPVTAMKLLIDQEKNQERKQALLYEWSRINSMLDTQLYITRLESQRKDMYFDYVSLKRMVIDEIQLTRHISQVKGIGFDVDFKVDDYVYTDIKWCRMIIRQILSNALKYSENFNIEIGTELNDQHVSLYIKDYGRGISKKDMPRIFERGFTSTANRNETTSSGMGLYLVNSVKDQLGIHLQVTSTVGKGTTVRLIFPLQNEIVERMSEVTNLSF.

2 helical membrane passes run 15-35 (MNWI…SLID) and 43-63 (LFYI…LTYF). The region spanning 126–332 (EFVHDIKTPV…TVRLIFPLQN (207 aa)) is the Histidine kinase domain.

As to quaternary structure, interacts with GraX.

Its subcellular location is the cell membrane. It catalyses the reaction ATP + protein L-histidine = ADP + protein N-phospho-L-histidine.. Member of the two-component regulatory system GraR/GraS involved in resistance against cationic antimicrobial peptides (CAMPs). Functions as a sensor protein kinase which phosphorylates GraR through the auxiliary protein GraX. In turn, GraR up-regulates many genes such as adhesins, exoproteins, transporters, toxins, and proteins involved in cell wall synthesis. Down-regulates the expression of many genes involved in RNA and amino acid synthesis or glycolysis. This chain is Sensor protein kinase GraS (graS), found in Staphylococcus aureus (strain MSSA476).